A 275-amino-acid polypeptide reads, in one-letter code: Large ribosomal subunit protein uL2c (275 aa).

Disordered regions lie at residues 1–28 and 227–251; these read MGIR…TKSK and PCDH…TPWG. The span at 10-22 shows a compositional bias: polar residues; it reads TPGTRNRSSSDFS.

It belongs to the universal ribosomal protein uL2 family. Part of the 50S ribosomal subunit.

It localises to the plastid. Its subcellular location is the chloroplast. The sequence is that of Large ribosomal subunit protein uL2c (rpl2) from Rhodomonas salina (Cryptomonas salina).